Consider the following 95-residue polypeptide: MRQYELMIILDPSQDERTVAPSLDKFLEVVRKDKGDVVKVDVWGKRRLAYPIDKKEEGVYAVVDLKCESATVLELDRVLNLNDGVLRTKVLRLDK.

Belongs to the bacterial ribosomal protein bS6 family.

Functionally, binds together with bS18 to 16S ribosomal RNA. The protein is Small ribosomal subunit protein bS6 of Corynebacterium glutamicum (strain ATCC 13032 / DSM 20300 / JCM 1318 / BCRC 11384 / CCUG 27702 / LMG 3730 / NBRC 12168 / NCIMB 10025 / NRRL B-2784 / 534).